Here is a 376-residue protein sequence, read N- to C-terminus: Glycerol-3-phosphate acyltransferase 9 (376 aa).

The Cytoplasmic portion of the chain corresponds to 1–78 (MSSTAGRLVT…SNPPEPWNWN (78 aa)). Serine 13 carries the phosphoserine modification. The next 3 helical transmembrane spans lie at 79–99 (IYLFPLYCFGVVVRYCILFPL), 102–122 (FTLAFGWIIFLSLFIPVNALL), and 135–155 (VLVEMICSFFVASWTGVVKYH). At 156–376 (GPRPSIRPKQ…ESILARLEEK (221 aa)) the chain is on the cytoplasmic side. Residues 168–180 (VANHTSMIDFIVL) form a catalytic region. The HXXXXD motif signature appears at 171 to 176 (HTSMID). 209–218 (GCIWFNRSEA) contacts sn-glycerol 3-phosphate. Residues 242–262 (IFPEGTCVNNNYTVMFKKGAF) form a glycerol-3-phosphate binding region. The segment at 266-275 (CTVCPIAIKY) is catalytic. Residues 369–373 (ILARL) are endoplasmic reticulum targeting.

This sequence belongs to the 1-acyl-sn-glycerol-3-phosphate acyltransferase family. In terms of assembly, self-interacts. Interacts with LPAT2 and LPCAT2. Up-regulated during embryogenesis. Expressed in seedlings, leaves, stems, roots, floral buds, flowers, pollen, and siliques at various developmental stages.

The protein localises to the endoplasmic reticulum membrane. The enzyme catalyses sn-glycerol 3-phosphate + an acyl-CoA = a 1-acyl-sn-glycero-3-phosphate + CoA. Its pathway is glycerolipid metabolism; triacylglycerol biosynthesis. Functionally, essential protein. Required for male and female gametophytes development. Exhibits sn-1 acyltransferase activity with high specificity for acyl-coenzyme A, thus triggering storage lipid biosynthesis and playing an important role in the Kennedy pathway of glycerolipid biosynthesis. Catalyzes triacylglycerol (TAG) accumulation involved in membrane lipid and oil biosynthesis, especially in seeds. Also contributes to the biosynthesis of both polar lipids and TAG in developing leaves, as well as lipid droplet production in developing pollen grains. Seems to not contribute to surface lipid biosynthesis (e.g. waxes and cutin). This chain is Glycerol-3-phosphate acyltransferase 9, found in Arabidopsis thaliana (Mouse-ear cress).